We begin with the raw amino-acid sequence, 570 residues long: Sulfite reductase [NADPH] hemoprotein beta-component (570 aa).

Positions 434, 440, 479, and 483 each coordinate [4Fe-4S] cluster. Cysteine 483 is a binding site for siroheme.

The protein belongs to the nitrite and sulfite reductase 4Fe-4S domain family. In terms of assembly, alpha(8)-beta(8). The alpha component is a flavoprotein, the beta component is a hemoprotein. Requires siroheme as cofactor. [4Fe-4S] cluster serves as cofactor.

It carries out the reaction hydrogen sulfide + 3 NADP(+) + 3 H2O = sulfite + 3 NADPH + 4 H(+). It participates in sulfur metabolism; hydrogen sulfide biosynthesis; hydrogen sulfide from sulfite (NADPH route): step 1/1. Component of the sulfite reductase complex that catalyzes the 6-electron reduction of sulfite to sulfide. This is one of several activities required for the biosynthesis of L-cysteine from sulfate. The chain is Sulfite reductase [NADPH] hemoprotein beta-component from Klebsiella pneumoniae subsp. pneumoniae (strain ATCC 700721 / MGH 78578).